The chain runs to 430 residues: MDIPVNAAKPGRRRYLTLVMIFITVVICYVDRANLAVASAHIQEEFGITKAEMGYVFSAFAWLYTLCQIPGGWFLDRVGSRVTYFIAIFGWSVATLFQGFATGLMSLIGLRAITGIFEAPAFPTNNRMVTSWFPEHERASAVGFYTSGQFVGLAFLTPLLIWIQEMLSWHWVFIVTGGIGIIWSLIWFKVYQPPRLTKGISKAELDYIRDGGGLVDGDAPVKKEARQPLTAKDWKLVFHRKLIGVYLGQFAVASTLWFFLTWFPNYLTQEKGITALKAGFMTTVPFLAAFVGVLLSGWVADLLVRKGFSLGFARKTPIICGLLISTCIMGANYTNDPMMIMCLMALAFFGNGFASITWSLVSSLAPMRLIGLTGGVFNFAGGLGGITVPLVVGYLAQGYGFAPALVYISAVALIGALSYILLVGDVKRVG.

Topologically, residues 1–17 are cytoplasmic; sequence MDIPVNAAKPGRRRYLT. The helical transmembrane segment at 18–39 threads the bilayer; it reads LVMIFITVVICYVDRANLAVAS. Residues Y29 and R32 each contribute to the D-galactonate site. Topologically, residues 40-50 are periplasmic; it reads AHIQEEFGITK. Residues 51–74 form a helical membrane-spanning segment; that stretch reads AEMGYVFSAFAWLYTLCQIPGGWF. D-galactonate is bound at residue Y64. The Cytoplasmic segment spans residues 75-81; the sequence is LDRVGSR. Residues 82–100 traverse the membrane as a helical segment; that stretch reads VTYFIAIFGWSVATLFQGF. The Periplasmic portion of the chain corresponds to 101–103; the sequence is ATG. A helical transmembrane segment spans residues 104–125; that stretch reads LMSLIGLRAITGIFEAPAFPTN. Residues 126–141 lie on the Cytoplasmic side of the membrane; the sequence is NRMVTSWFPEHERASA. A helical membrane pass occupies residues 142–164; sequence VGFYTSGQFVGLAFLTPLLIWIQ. The Periplasmic segment spans residues 165–168; sequence EMLS. A helical transmembrane segment spans residues 169–190; sequence WHWVFIVTGGIGIIWSLIWFKV. Topologically, residues 191–241 are cytoplasmic; sequence YQPPRLTKGISKAELDYIRDGGGLVDGDAPVKKEARQPLTAKDWKLVFHRK. Residues 242 to 267 traverse the membrane as a helical segment; sequence LIGVYLGQFAVASTLWFFLTWFPNYL. The Periplasmic portion of the chain corresponds to 268 to 276; that stretch reads TQEKGITAL. The helical transmembrane segment at 277–297 threads the bilayer; sequence KAGFMTTVPFLAAFVGVLLSG. Residues 298 to 314 lie on the Cytoplasmic side of the membrane; the sequence is WVADLLVRKGFSLGFAR. A helical membrane pass occupies residues 315 to 333; that stretch reads KTPIICGLLISTCIMGANY. Residues 334–336 lie on the Periplasmic side of the membrane; that stretch reads TND. The helical transmembrane segment at 337–354 threads the bilayer; sequence PMMIMCLMALAFFGNGFA. Over 355-373 the chain is Cytoplasmic; the sequence is SITWSLVSSLAPMRLIGLT. W358 is a binding site for D-galactonate. A helical membrane pass occupies residues 374 to 395; that stretch reads GGVFNFAGGLGGITVPLVVGYL. The Periplasmic segment spans residues 396–400; the sequence is AQGYG. A helical membrane pass occupies residues 401–423; the sequence is FAPALVYISAVALIGALSYILLV. Residues 424 to 430 lie on the Cytoplasmic side of the membrane; that stretch reads GDVKRVG.

The protein belongs to the major facilitator superfamily. Phthalate permease family.

Its subcellular location is the cell inner membrane. It catalyses the reaction D-galactonate(in) + H(+)(in) = D-galactonate(out) + H(+)(out). Involved in D-galactonate metabolism. Catalyzes the proton-dependent uptake of galactonate into the cell. In Escherichia coli O6:H1 (strain CFT073 / ATCC 700928 / UPEC), this protein is D-galactonate transporter (dgoT).